A 740-amino-acid chain; its full sequence is Anaphase-promoting complex subunit 5 (740 aa).

Serine 180 bears the Phosphoserine mark. TPR repeat units follow at residues 194–234 (QKQA…FNPD), 235–285 (FAEA…GRSL), 286–322 (RYAA…SNDH), 323–363 (VCLQ…YLAS), 364–403 (LGIQ…SELI), 404–451 (DISI…TESF), 452–485 (AVAL…FPPN), 486–525 (SQHA…ALNG), 526–565 (IEGV…TEMV), 566–605 (ISVL…QYLA), 606–645 (SETV…VLDK), 646–681 (GRAM…NLSE), and 682–721 (AKNY…CAMI). Phosphothreonine is present on threonine 217.

The protein belongs to the APC5 family. The mammalian APC/C is composed at least of 14 distinct subunits ANAPC1, ANAPC2, CDC27/APC3, ANAPC4, ANAPC5, CDC16/APC6, ANAPC7, CDC23/APC8, ANAPC10, ANAPC11, CDC26/APC12, ANAPC13, ANAPC15 and ANAPC16 that assemble into a complex of at least 19 chains with a combined molecular mass of around 1.2 MDa; APC/C interacts with FZR1 and FBXO5.

The protein resides in the nucleus. The protein localises to the cytoplasm. It localises to the cytoskeleton. It is found in the spindle. It functions in the pathway protein modification; protein ubiquitination. Functionally, component of the anaphase promoting complex/cyclosome (APC/C), a cell cycle-regulated E3 ubiquitin ligase that controls progression through mitosis and the G1 phase of the cell cycle. The APC/C complex acts by mediating ubiquitination and subsequent degradation of target proteins: it mainly mediates the formation of 'Lys-11'-linked polyubiquitin chains and, to a lower extent, the formation of 'Lys-48'- and 'Lys-63'-linked polyubiquitin chains. The APC/C complex catalyzes assembly of branched 'Lys-11'-/'Lys-48'-linked branched ubiquitin chains on target proteins. The polypeptide is Anaphase-promoting complex subunit 5 (Anapc5) (Mus musculus (Mouse)).